Reading from the N-terminus, the 201-residue chain is Large ribosomal subunit protein bL12m (201 aa).

The N-terminal 38 residues, 1 to 38, are a transit peptide targeting the mitochondrion; it reads MLPVAASRCLWGPRLGLRGAALRLARQQMPSVCAARQL. Disordered stretches follow at residues 37 to 60 and 109 to 130; these read QLRS…APKE and VSAA…QKER. Residues Lys-128, Lys-141, Lys-145, and Lys-147 each carry the N6-acetyllysine modification. Lys-153 is subject to N6-acetyllysine; alternate. Lys-153 carries the post-translational modification N6-succinyllysine; alternate. A Glycyl lysine isopeptide (Lys-Gly) (interchain with G-Cter in ubiquitin) cross-link involves residue Lys-153. Lys-165 carries the N6-succinyllysine modification. 2 positions are modified to N6-acetyllysine: Lys-166 and Lys-176. Lys-181 carries the N6-acetyllysine; alternate modification. Lys-181 carries the post-translational modification N6-succinyllysine; alternate. The residue at position 188 (Lys-188) is an N6-acetyllysine.

It belongs to the bacterial ribosomal protein bL12 family. Component of the mitochondrial ribosome large subunit (39S) which comprises a 16S rRNA and about 50 distinct proteins. Interacts with NOA1. Two mature forms are produced by differential two-step proteolytic cleavage. Cleaved by the mitochondrial processing protease to produce the long mature form and subsequently by the mitochondrial intermediate protease to produce the short mature form. Post-translationally, in the presence of CUL3, undergoes 'Lys-63'-linked ubiquitination at Lys-153 which results in proteasomal degradation.

The protein localises to the mitochondrion matrix. In terms of biological role, as a component of the mitochondrial large ribosomal subunit, plays a role in mitochondrial translation. When present in mitochondria as a free protein not associated with the ribosome, associates with mitochondrial RNA polymerase POLRMT to activate transcription. Required for POLRMT stability. In Mus musculus (Mouse), this protein is Large ribosomal subunit protein bL12m (Mrpl12).